A 371-amino-acid polypeptide reads, in one-letter code: 4-hydroxy-3-methylbut-2-en-1-yl diphosphate synthase (flavodoxin) (371 aa).

[4Fe-4S] cluster is bound by residues cysteine 270, cysteine 273, cysteine 305, and glutamate 312.

This sequence belongs to the IspG family. [4Fe-4S] cluster is required as a cofactor.

It carries out the reaction (2E)-4-hydroxy-3-methylbut-2-enyl diphosphate + oxidized [flavodoxin] + H2O + 2 H(+) = 2-C-methyl-D-erythritol 2,4-cyclic diphosphate + reduced [flavodoxin]. It functions in the pathway isoprenoid biosynthesis; isopentenyl diphosphate biosynthesis via DXP pathway; isopentenyl diphosphate from 1-deoxy-D-xylulose 5-phosphate: step 5/6. Functionally, converts 2C-methyl-D-erythritol 2,4-cyclodiphosphate (ME-2,4cPP) into 1-hydroxy-2-methyl-2-(E)-butenyl 4-diphosphate. The protein is 4-hydroxy-3-methylbut-2-en-1-yl diphosphate synthase (flavodoxin) of Psychrobacter arcticus (strain DSM 17307 / VKM B-2377 / 273-4).